The following is a 602-amino-acid chain: uncharacterized protein (602 aa).

The Helicase ATP-binding domain maps to Q51–D210. The span at P430–L439 shows a compositional bias: basic and acidic residues. 2 disordered regions span residues P430–G452 and R518–H538. Over residues K523–S534 the composition is skewed to polar residues.

To M.leprae ML1624.

This is an uncharacterized protein from Mycobacterium tuberculosis (strain CDC 1551 / Oshkosh).